The chain runs to 293 residues: Ethanolamine ammonia-lyase small subunit (293 aa).

Adenosylcob(III)alamin contacts are provided by Val-207 and Glu-228.

Belongs to the EutC family. In terms of assembly, the basic unit is a heterodimer which dimerizes to form tetramers. The heterotetramers trimerize; 6 large subunits form a core ring with 6 small subunits projecting outwards. Adenosylcob(III)alamin serves as cofactor.

The protein resides in the bacterial microcompartment. The catalysed reaction is ethanolamine = acetaldehyde + NH4(+). Its pathway is amine and polyamine degradation; ethanolamine degradation. Catalyzes the deamination of various vicinal amino-alcohols to oxo compounds. Allows this organism to utilize ethanolamine as the sole source of nitrogen and carbon in the presence of external vitamin B12. The chain is Ethanolamine ammonia-lyase small subunit from Listeria innocua serovar 6a (strain ATCC BAA-680 / CLIP 11262).